A 214-amino-acid polypeptide reads, in one-letter code: Redox-sensing transcriptional repressor Rex (214 aa).

A DNA-binding region (H-T-H motif) is located at residues 17–56; that stretch reads LYYRIFKRFHADQVEKASSKQIADAMGIDSATVRRDFSYF. 91 to 96 serves as a coordination point for NAD(+); it reads GCGNIG.

It belongs to the transcriptional regulatory Rex family. In terms of assembly, homodimer.

The protein resides in the cytoplasm. Modulates transcription in response to changes in cellular NADH/NAD(+) redox state. The sequence is that of Redox-sensing transcriptional repressor Rex from Streptococcus pyogenes serotype M4 (strain MGAS10750).